Consider the following 495-residue polypeptide: 3-octaprenyl-4-hydroxybenzoate carboxy-lyase (495 aa).

Position 172 (asparagine 172) interacts with Mn(2+). Residues 175–177 (IYR), 189–191 (RWL), and 194–195 (RG) each bind prenylated FMN. Residue glutamate 238 participates in Mn(2+) binding. Aspartate 287 acts as the Proton donor in catalysis.

This sequence belongs to the UbiD family. As to quaternary structure, homohexamer. Prenylated FMN is required as a cofactor. Requires Mn(2+) as cofactor.

It localises to the cell membrane. The enzyme catalyses a 4-hydroxy-3-(all-trans-polyprenyl)benzoate + H(+) = a 2-(all-trans-polyprenyl)phenol + CO2. It participates in cofactor biosynthesis; ubiquinone biosynthesis. In terms of biological role, catalyzes the decarboxylation of 3-octaprenyl-4-hydroxy benzoate to 2-octaprenylphenol, an intermediate step in ubiquinone biosynthesis. The sequence is that of 3-octaprenyl-4-hydroxybenzoate carboxy-lyase from Marinobacter nauticus (strain ATCC 700491 / DSM 11845 / VT8) (Marinobacter aquaeolei).